The chain runs to 229 residues: Uracil-DNA glycosylase (229 aa).

Asp72 serves as the catalytic Proton acceptor.

The protein belongs to the uracil-DNA glycosylase (UDG) superfamily. UNG family.

Its subcellular location is the cytoplasm. It catalyses the reaction Hydrolyzes single-stranded DNA or mismatched double-stranded DNA and polynucleotides, releasing free uracil.. Its function is as follows. Excises uracil residues from the DNA which can arise as a result of misincorporation of dUMP residues by DNA polymerase or due to deamination of cytosine. This chain is Uracil-DNA glycosylase, found in Dichelobacter nodosus (strain VCS1703A).